The primary structure comprises 292 residues: MEIVHVPVMVKEVLSYFSNLRGVFLDCTVGAGGHSEAILENIKGSVVIGIDVDEEILSVAKQRLKKYESEGRAKLLKATYVEAQRVLSQLGVKAVNGIIMDLGVSTLQLMKGERGFAFSSDGPLDMRMDKTQRLTAYDIVNFWQENQLRRIFFEYGEEKRYAGRIARFIVKNRPVETTAKLVEVIARALPEKERRFRRRHFATRVFQAIRIAVNNELENLRNFLVQVPDILNQNGRIIVISFHSLEDRIVKEAFRSIQELDVLTRKPVRPSLEEVRENPKARSAKMRIAERK.

S-adenosyl-L-methionine-binding positions include 32–34, aspartate 51, leucine 87, aspartate 101, and glutamine 108; that span reads GGH.

The protein belongs to the methyltransferase superfamily. RsmH family.

The protein resides in the cytoplasm. It carries out the reaction cytidine(1402) in 16S rRNA + S-adenosyl-L-methionine = N(4)-methylcytidine(1402) in 16S rRNA + S-adenosyl-L-homocysteine + H(+). Specifically methylates the N4 position of cytidine in position 1402 (C1402) of 16S rRNA. This is Ribosomal RNA small subunit methyltransferase H from Pseudothermotoga lettingae (strain ATCC BAA-301 / DSM 14385 / NBRC 107922 / TMO) (Thermotoga lettingae).